Reading from the N-terminus, the 177-residue chain is Probable inosine/xanthosine triphosphatase (177 aa).

The protein belongs to the YjjX NTPase family. Homodimer. The cofactor is Mg(2+). Requires Mn(2+) as cofactor.

The catalysed reaction is XTP + H2O = XDP + phosphate + H(+). It carries out the reaction ITP + H2O = IDP + phosphate + H(+). Its function is as follows. Phosphatase that hydrolyzes non-canonical purine nucleotides such as XTP and ITP to their respective diphosphate derivatives. Probably excludes non-canonical purines from DNA/RNA precursor pool, thus preventing their incorporation into DNA/RNA and avoiding chromosomal lesions. The sequence is that of Probable inosine/xanthosine triphosphatase from Pyrobaculum islandicum (strain DSM 4184 / JCM 9189 / GEO3).